Reading from the N-terminus, the 335-residue chain is Protein-lysine N-methyltransferase EEF2KMT (335 aa).

Residue methionine 1 is modified to N-acetylmethionine. Residues tryptophan 139, 165-167, tryptophan 228, and alanine 247 each bind S-adenosyl-L-methionine; that span reads GSG.

Belongs to the class I-like SAM-binding methyltransferase superfamily. EEF2KMT family. In terms of assembly, interacts with FAM86B2 and FAM86C1P.

It localises to the cytoplasm. The enzyme catalyses L-lysyl-[protein] + 3 S-adenosyl-L-methionine = N(6),N(6),N(6)-trimethyl-L-lysyl-[protein] + 3 S-adenosyl-L-homocysteine + 3 H(+). Functionally, catalyzes the trimethylation of eukaryotic elongation factor 2 (EEF2) on 'Lys-525'. The protein is Protein-lysine N-methyltransferase EEF2KMT (Eef2kmt) of Mus musculus (Mouse).